Here is a 619-residue protein sequence, read N- to C-terminus: Alpha-(1,6)-fucosyltransferase (619 aa).

The Cytoplasmic segment spans residues 1–17; sequence MLLVRQLFGASANSWAR. A helical; Signal-anchor for type II membrane protein membrane pass occupies residues 18–38; sequence ALIIFVLAWIGLVYVFVVKLT. The Lumenal portion of the chain corresponds to 39-619; sequence NTQGQQAAGE…TAKLPLYAGI (581 aa). Cystine bridges form between cysteine 253–cysteine 315, cysteine 261–cysteine 279, and cysteine 267–cysteine 271. The region spanning 255-539 is the GT23 domain; the sequence is NARKLVCKLN…PDAAHRFKSL (285 aa). The short motif at 345 to 351 is the SH3-binding element; the sequence is PRPPYLP. Residues 411–412 form an important for donor substrate binding region; it reads RR. A disulfide bridge connects residues cysteine 511 and cysteine 518. The 62-residue stretch at 548–609 folds into the SH3 domain; that stretch reads QNAHNRRVVI…PSFKVEEKVD (62 aa).

Belongs to the glycosyltransferase 23 family. The cofactor is Mn(2+). Mg(2+) serves as cofactor.

The protein localises to the golgi apparatus. It localises to the golgi stack membrane. It carries out the reaction N(4)-{beta-D-GlcNAc-(1-&gt;2)-alpha-D-Man-(1-&gt;3)-[beta-D-GlcNAc-(1-&gt;2)-alpha-D-Man-(1-&gt;6)]-beta-D-Man-(1-&gt;4)-beta-D-GlcNAc-(1-&gt;4)-beta-D-GlcNAc}-L-asparaginyl-[protein] + GDP-beta-L-fucose = an N(4)-{beta-D-GlcNAc-(1-&gt;2)-alpha-D-Man-(1-&gt;3)-[beta-D-GlcNAc-(1-&gt;2)-alpha-D-Man-(1-&gt;6)]-beta-D-Man-(1-&gt;4)-beta-D-GlcNAc-(1-&gt;4)-[alpha-L-Fuc-(1-&gt;6)]-beta-D-GlcNAc}-L-asparaginyl-[protein] + GDP + H(+). It functions in the pathway protein modification; protein glycosylation. Functionally, catalyzes the addition of fucose in alpha 1-6 linkage to the first GlcNAc residue, next to the peptide chains in N-glycans. The addition is prevented if the GlcNAc residue is already fucosylated. The sequence is that of Alpha-(1,6)-fucosyltransferase (FucT6) from Drosophila melanogaster (Fruit fly).